The following is a 504-amino-acid chain: Maturase K (504 aa).

This sequence belongs to the intron maturase 2 family. MatK subfamily.

It is found in the plastid. It localises to the chloroplast. In terms of biological role, usually encoded in the trnK tRNA gene intron. Probably assists in splicing its own and other chloroplast group II introns. The polypeptide is Maturase K (Ochroma pyramidale (Balsa)).